We begin with the raw amino-acid sequence, 274 residues long: 3-methyl-2-oxobutanoate hydroxymethyltransferase (274 aa).

Mg(2+) is bound by residues Asp-49 and Asp-88. 3-methyl-2-oxobutanoate is bound by residues 49 to 50, Asp-88, and Lys-118; that span reads DS. Glu-120 lines the Mg(2+) pocket. Residue Glu-187 is the Proton acceptor of the active site.

This sequence belongs to the PanB family. As to quaternary structure, homodecamer; pentamer of dimers. The cofactor is Mg(2+).

The protein localises to the cytoplasm. The enzyme catalyses 3-methyl-2-oxobutanoate + (6R)-5,10-methylene-5,6,7,8-tetrahydrofolate + H2O = 2-dehydropantoate + (6S)-5,6,7,8-tetrahydrofolate. It participates in cofactor biosynthesis; (R)-pantothenate biosynthesis; (R)-pantoate from 3-methyl-2-oxobutanoate: step 1/2. Functionally, catalyzes the reversible reaction in which hydroxymethyl group from 5,10-methylenetetrahydrofolate is transferred onto alpha-ketoisovalerate to form ketopantoate. The sequence is that of 3-methyl-2-oxobutanoate hydroxymethyltransferase from Paramagnetospirillum magneticum (strain ATCC 700264 / AMB-1) (Magnetospirillum magneticum).